The primary structure comprises 433 residues: 23S rRNA (uracil(1939)-C(5))-methyltransferase RlmD (433 aa).

The region spanning 10 to 68 is the TRAM domain; sequence RTTTRQIITVSVNDLDSFGQGVARHNGKTLFIPGLLPQENAEVTVTEDKKQYARAKVVR. [4Fe-4S] cluster contacts are provided by C81, C87, C90, and C162. Positions 265, 294, 299, 315, 342, and 363 each coordinate S-adenosyl-L-methionine. The active-site Nucleophile is the C389.

Belongs to the class I-like SAM-binding methyltransferase superfamily. RNA M5U methyltransferase family. RlmD subfamily.

The enzyme catalyses uridine(1939) in 23S rRNA + S-adenosyl-L-methionine = 5-methyluridine(1939) in 23S rRNA + S-adenosyl-L-homocysteine + H(+). Catalyzes the formation of 5-methyl-uridine at position 1939 (m5U1939) in 23S rRNA. In Shigella sonnei (strain Ss046), this protein is 23S rRNA (uracil(1939)-C(5))-methyltransferase RlmD.